Reading from the N-terminus, the 443-residue chain is Mevalonate kinase (443 aa).

Residues K12, S138, and 143-149 contribute to the ATP site; that span reads GAGLGSS. Positions 149 and 191 each coordinate Mg(2+). The active-site Proton acceptor is the D202.

It belongs to the GHMP kinase family. Mevalonate kinase subfamily. In terms of assembly, homodimer. Mg(2+) is required as a cofactor.

Its subcellular location is the cytoplasm. The protein resides in the cytosol. The enzyme catalyses (R)-mevalonate + ATP = (R)-5-phosphomevalonate + ADP + H(+). It functions in the pathway isoprenoid biosynthesis; isopentenyl diphosphate biosynthesis via mevalonate pathway; isopentenyl diphosphate from (R)-mevalonate: step 1/3. Farnesyl pyrophosphate and geranyl pyrophosphate inhibit mevalonate kinase by binding competitively at the ATP-binding site. Mevalonate kinase; part of the second module of ergosterol biosynthesis pathway that includes the middle steps of the pathway. ERG12 converts mevalonate into 5-phosphomevalonate. The second module is carried out in the vacuole and involves the formation of farnesyl diphosphate, which is also an important intermediate in the biosynthesis of ubiquinone, dolichol, heme and prenylated proteins. Activity by the mevalonate kinase ERG12 first converts mevalonate into 5-phosphomevalonate. 5-phosphomevalonate is then further converted to 5-diphosphomevalonate by the phosphomevalonate kinase ERG8. The diphosphomevalonate decarboxylase MVD1/ERG19 then produces isopentenyl diphosphate. The isopentenyl-diphosphate delta-isomerase IDI1 then catalyzes the 1,3-allylic rearrangement of the homoallylic substrate isopentenyl (IPP) to its highly electrophilic allylic isomer, dimethylallyl diphosphate (DMAPP). Finally the farnesyl diphosphate synthase ERG20 catalyzes the sequential condensation of isopentenyl pyrophosphate with dimethylallyl pyrophosphate, and then with the resultant geranylpyrophosphate to the ultimate product farnesyl pyrophosphate. The protein is Mevalonate kinase of Saccharomyces cerevisiae (strain ATCC 204508 / S288c) (Baker's yeast).